A 305-amino-acid polypeptide reads, in one-letter code: Oxygen-dependent coproporphyrinogen-III oxidase (305 aa).

Residue Ser98 participates in substrate binding. Residues His102 and His112 each contribute to the a divalent metal cation site. Residue His112 is the Proton donor of the active site. Residue Asn114–Arg116 coordinates substrate. The a divalent metal cation site is built by His151 and His181. The interval Tyr246–Glu281 is important for dimerization. Residue Gly264–Arg266 coordinates substrate.

This sequence belongs to the aerobic coproporphyrinogen-III oxidase family. In terms of assembly, homodimer. A divalent metal cation is required as a cofactor.

The protein resides in the cytoplasm. It catalyses the reaction coproporphyrinogen III + O2 + 2 H(+) = protoporphyrinogen IX + 2 CO2 + 2 H2O. It participates in porphyrin-containing compound metabolism; protoporphyrin-IX biosynthesis; protoporphyrinogen-IX from coproporphyrinogen-III (O2 route): step 1/1. Its function is as follows. Involved in the heme biosynthesis. Catalyzes the aerobic oxidative decarboxylation of propionate groups of rings A and B of coproporphyrinogen-III to yield the vinyl groups in protoporphyrinogen-IX. The polypeptide is Oxygen-dependent coproporphyrinogen-III oxidase (Vibrio atlanticus (strain LGP32) (Vibrio splendidus (strain Mel32))).